The following is a 545-amino-acid chain: Baeyer-Villiger monooxygenase (545 aa).

Residues Phe-24, Asp-45, Trp-54, Asp-65, Tyr-71, and Val-118 each coordinate FAD.

The protein belongs to the FAD-binding monooxygenase family. FAD is required as a cofactor.

Functionally, catalyzes a Baeyer-Villiger oxidation reaction, i.e. the insertion of an oxygen atom into a carbon-carbon bond adjacent to a carbonyl, which converts ketones to esters or lactones using NADPH as an electron donor. Besides cycloalkanones, can use cyclic alpha,beta-unsaturated ketones as substrates, leading to conjugated ene-lactones. Can also act on methylated cycloalkanones and methylated cycloalkenones with high enantioselectivity in some cases. This Pseudooceanicola batsensis (strain ATCC BAA-863 / DSM 15984 / KCTC 12145 / HTCC2597) (Oceanicola batsensis) protein is Baeyer-Villiger monooxygenase.